Consider the following 336-residue polypeptide: tRNA(Ile)-lysidine synthase (336 aa).

32–37 (SGGQDS) is a binding site for ATP.

It belongs to the tRNA(Ile)-lysidine synthase family.

The protein resides in the cytoplasm. The enzyme catalyses cytidine(34) in tRNA(Ile2) + L-lysine + ATP = lysidine(34) in tRNA(Ile2) + AMP + diphosphate + H(+). Functionally, ligates lysine onto the cytidine present at position 34 of the AUA codon-specific tRNA(Ile) that contains the anticodon CAU, in an ATP-dependent manner. Cytidine is converted to lysidine, thus changing the amino acid specificity of the tRNA from methionine to isoleucine. The protein is tRNA(Ile)-lysidine synthase of Synechococcus sp. (strain JA-3-3Ab) (Cyanobacteria bacterium Yellowstone A-Prime).